Reading from the N-terminus, the 761-residue chain is T-box protein 1 (761 aa).

2 disordered regions span residues 1-85 and 167-210; these read MLGR…QPLT and QTDP…CSSP. Composition is skewed to polar residues over residues 37–61 and 167–179; these read DLQNTPARSNASTDYSTQSLSNQAG and QTDPANPSGFPQA. Low complexity-rich tracts occupy residues 180–191 and 198–210; these read SPSDLSTTSSQS and SSPSVSSSTCSSP. The T-box DNA-binding region spans 287–456; the sequence is LWRKFHEHRT…HNPFAKGFRD (170 aa). Residues 496-510 are compositionally biased toward polar residues; it reads TTGFPCQTNPTQRSN. Disordered regions lie at residues 496 to 515, 545 to 612, and 637 to 687; these read TTGFPCQTNPTQRSNGQHEG, SGDA…TPAH, and VCSS…LLTT. The segment covering 600-612 has biased composition (basic and acidic residues); that stretch reads GCERSNEKHTPAH. Residues 637–646 are compositionally biased toward polar residues; the sequence is VCSSDNSNPD. The span at 656 to 687 shows a compositional bias: low complexity; the sequence is SPAGSGSPSVTSGTSLFTSGSSAAPSPPLLTT.

It localises to the nucleus. Functionally, probable transcriptional regulator involved in developmental processes. The polypeptide is T-box protein 1 (tbr1) (Patiria pectinifera (Starfish)).